Here is a 343-residue protein sequence, read N- to C-terminus: Holliday junction branch migration complex subunit RuvB (343 aa).

The tract at residues 1–26 (MKEKILTFSSDPSSPVTRHETEEDTG) is disordered. The large ATPase domain (RuvB-L) stretch occupies residues 3-193 (EKILTFSSDP…FGIFRKFDFY (191 aa)). Residues 7 to 16 (TFSSDPSSPV) are compositionally biased toward polar residues. Residues Leu-32, Arg-33, Gly-74, Lys-77, Thr-78, Thr-79, 140 to 142 (EDF), Arg-183, Tyr-193, and Arg-230 each bind ATP. Position 78 (Thr-78) interacts with Mg(2+). The tract at residues 194–264 (SRQDLARIVS…AIDDALALEG (71 aa)) is small ATPAse domain (RuvB-S). Residues 267–343 (EKGLTGLDRS…YRHLGVQWRG (77 aa)) form a head domain (RuvB-H) region. Arg-322 and Arg-327 together coordinate DNA.

Belongs to the RuvB family. In terms of assembly, homohexamer. Forms an RuvA(8)-RuvB(12)-Holliday junction (HJ) complex. HJ DNA is sandwiched between 2 RuvA tetramers; dsDNA enters through RuvA and exits via RuvB. An RuvB hexamer assembles on each DNA strand where it exits the tetramer. Each RuvB hexamer is contacted by two RuvA subunits (via domain III) on 2 adjacent RuvB subunits; this complex drives branch migration. In the full resolvosome a probable DNA-RuvA(4)-RuvB(12)-RuvC(2) complex forms which resolves the HJ.

The protein resides in the cytoplasm. The enzyme catalyses ATP + H2O = ADP + phosphate + H(+). Functionally, the RuvA-RuvB-RuvC complex processes Holliday junction (HJ) DNA during genetic recombination and DNA repair, while the RuvA-RuvB complex plays an important role in the rescue of blocked DNA replication forks via replication fork reversal (RFR). RuvA specifically binds to HJ cruciform DNA, conferring on it an open structure. The RuvB hexamer acts as an ATP-dependent pump, pulling dsDNA into and through the RuvAB complex. RuvB forms 2 homohexamers on either side of HJ DNA bound by 1 or 2 RuvA tetramers; 4 subunits per hexamer contact DNA at a time. Coordinated motions by a converter formed by DNA-disengaged RuvB subunits stimulates ATP hydrolysis and nucleotide exchange. Immobilization of the converter enables RuvB to convert the ATP-contained energy into a lever motion, pulling 2 nucleotides of DNA out of the RuvA tetramer per ATP hydrolyzed, thus driving DNA branch migration. The RuvB motors rotate together with the DNA substrate, which together with the progressing nucleotide cycle form the mechanistic basis for DNA recombination by continuous HJ branch migration. Branch migration allows RuvC to scan DNA until it finds its consensus sequence, where it cleaves and resolves cruciform DNA. This is Holliday junction branch migration complex subunit RuvB from Desulfosudis oleivorans (strain DSM 6200 / JCM 39069 / Hxd3) (Desulfococcus oleovorans).